We begin with the raw amino-acid sequence, 158 residues long: Immunoglobulin J chain (158 aa).

Positions 1–22 (MKNHLFFWGVLAIFVQAVLVTA) are cleaved as a signal peptide. 3 disulfides stabilise this stretch: Cys36-Cys122, Cys95-Cys115, and Cys130-Cys155. N-linked (GlcNAc...) (complex) asparagine glycosylation is present at Asn72.

Part of the secretory IgA (sIgA) complex that consists of two, four or five IgA monomers, and two additional non-Ig polypeptides, namely the JCHAIN and the secretory component (the proteolytic product of PIGR). Part of the secretory IgM (sIgM) complex that consist of five IgM monomers, and two additional non-Ig polypeptides, namely the JCHAIN and the secretory component (the proteolytic product of PIGR). JCHAIN-containing IgM interacts (via CH4 domain) with FCRM (via Ig-like domain). N-glycosylated. N-glycans attached to Asn-72 varies from truncated, differentially fucosylated to sialylated (NeuGc) complex types: Man3GlcNAc2; GlcNAc2Man3GlcNAc2(Fuc); Gal1GlcNAc1Man3GlcNAc2; GlcNAc2Man3GlcNAc2; GlcNAc1Man3GlcNAc2; GlcNAc1Man2GlcNAc2 and NeuGc1Gal1GlcNAc2Man3GlcNAc2.

The protein localises to the secreted. Functionally, serves to link two monomer units of either IgM or IgA. In the case of IgM, the J chain-joined dimer is a nucleating unit for the IgM pentamer, and in the case of IgA it induces dimers and/or larger polymers. It also helps to bind these immunoglobulins to secretory component. The chain is Immunoglobulin J chain (JCHAIN) from Equus asinus (Donkey).